Consider the following 167-residue polypeptide: CKLF-like MARVEL transmembrane domain-containing protein 7 (167 aa).

An MARVEL domain is found at 32-158 (YPLTHGALFK…SLWLSYKITC (127 aa)). Transmembrane regions (helical) follow at residues 35–55 (THGALFKVAQMVTLLIAFICV), 69–89 (FEVVTMCDLIMILIFYLVHLF), 102–122 (LSELLHYLIGTLLLLIASIVI), and 132–152 (LVAGAIFGFLASFLCLASLWL).

The protein belongs to the chemokine-like factor family.

Its subcellular location is the membrane. The sequence is that of CKLF-like MARVEL transmembrane domain-containing protein 7 (Cmtm7) from Mus musculus (Mouse).